The sequence spans 174 residues: Protein CURVATURE THYLAKOID 1B, chloroplastic (174 aa).

Residues 1–20 are disordered; the sequence is MASLSVSSSSTIIDSRAPPS. The N-terminal 63 residues, 1–63, are a transit peptide targeting the chloroplast; the sequence is MASLSVSSSS…RKIVRNVVTR (63 aa). Ala-64 bears the N-acetylalanine mark. Over 64-100 the chain is Stromal; the sequence is ATTEVGEAPATTTEAETTELPEIVKTAQEAWEKVDDK. Residues 101–121 traverse the membrane as a helical segment; the sequence is YAIGSLAFAGVVALWGSAGMI. Residues 122-126 are Lumenal-facing; the sequence is SAIDR. A helical transmembrane segment spans residues 127 to 147; it reads LPLVPGVLELVGIGYTGWFTY. Over 148–174 the chain is Stromal; that stretch reads KNLVFKPDREALFEKVKSTYKDILGSS.

Belongs to the CURT family. As to quaternary structure, homo- and heterodimers and trimers. Interacts with PSAL. In terms of processing, phosphorylated on either Thr-65 or Thr-66 by a threonine specific thylakoid kinase.

Its subcellular location is the plastid. It localises to the chloroplast thylakoid membrane. In terms of biological role, determines thylakoid architecture by inducing membrane curvature. This chain is Protein CURVATURE THYLAKOID 1B, chloroplastic (CURT1B), found in Arabidopsis thaliana (Mouse-ear cress).